Reading from the N-terminus, the 317-residue chain is L-lactate dehydrogenase (317 aa).

Residues V17, D38, K43, Y68, and 82–83 contribute to the NAD(+) site; that span reads GV. Position 91 (R91) interacts with substrate. Residues S104, 121–123, and S146 each bind NAD(+); that span reads VSN. 123–126 serves as a coordination point for substrate; that stretch reads NPVD. 151–154 is a binding site for substrate; sequence DTSR. Beta-D-fructose 1,6-bisphosphate-binding residues include K156 and H171. H178 functions as the Proton acceptor in the catalytic mechanism. Position 224 is a phosphotyrosine (Y224). T233 contributes to the substrate binding site.

This sequence belongs to the LDH/MDH superfamily. LDH family. Homotetramer.

It is found in the cytoplasm. It catalyses the reaction (S)-lactate + NAD(+) = pyruvate + NADH + H(+). It participates in fermentation; pyruvate fermentation to lactate; (S)-lactate from pyruvate: step 1/1. Its activity is regulated as follows. Allosterically activated by fructose 1,6-bisphosphate (FBP). In terms of biological role, catalyzes the conversion of lactate to pyruvate. The sequence is that of L-lactate dehydrogenase from Clostridium perfringens (strain ATCC 13124 / DSM 756 / JCM 1290 / NCIMB 6125 / NCTC 8237 / Type A).